The following is a 277-amino-acid chain: Phosphoenolpyruvate synthase regulatory protein (277 aa).

Position 157–164 (G157–T164) interacts with ADP.

The protein belongs to the pyruvate, phosphate/water dikinase regulatory protein family. PSRP subfamily.

The enzyme catalyses [pyruvate, water dikinase] + ADP = [pyruvate, water dikinase]-phosphate + AMP + H(+). It catalyses the reaction [pyruvate, water dikinase]-phosphate + phosphate + H(+) = [pyruvate, water dikinase] + diphosphate. Bifunctional serine/threonine kinase and phosphorylase involved in the regulation of the phosphoenolpyruvate synthase (PEPS) by catalyzing its phosphorylation/dephosphorylation. The protein is Phosphoenolpyruvate synthase regulatory protein of Escherichia coli O1:K1 / APEC.